Here is a 152-residue protein sequence, read N- to C-terminus: 3-dehydroquinate dehydratase (152 aa).

The Proton acceptor role is filled by Tyr25. Substrate is bound by residues Asn76, His82, and Asp89. His102 functions as the Proton donor in the catalytic mechanism. Residues 103-104 (LS) and Arg113 contribute to the substrate site.

This sequence belongs to the type-II 3-dehydroquinase family. As to quaternary structure, homododecamer.

The enzyme catalyses 3-dehydroquinate = 3-dehydroshikimate + H2O. It participates in metabolic intermediate biosynthesis; chorismate biosynthesis; chorismate from D-erythrose 4-phosphate and phosphoenolpyruvate: step 3/7. Its function is as follows. Catalyzes a trans-dehydration via an enolate intermediate. The chain is 3-dehydroquinate dehydratase from Gloeothece citriformis (strain PCC 7424) (Cyanothece sp. (strain PCC 7424)).